A 593-amino-acid polypeptide reads, in one-letter code: Acetyl-coenzyme A transferase nodX (593 aa).

A disordered region spans residues 572-593; that stretch reads DEDEQGSGFRSGSGLGSGSIAD. Over residues 580 to 593 the composition is skewed to gly residues; it reads FRSGSGLGSGSIAD.

This sequence belongs to the CoA-transferase III family.

It participates in secondary metabolite biosynthesis. In terms of biological role, acetyl-coenzyme A transferase; part of the gene cluster that mediates the biosynthesis of the indole diterpenes nodulisporic acids (NA). Nodulisporic acid A (NAA) and its chemically modified derivatives are of particular significance because of their highly potent insecticidal activity against blood-feeding arthropods and lack of observable adverse effects on mammals, in particular the tremogenicity associated with the paspaline-derived IDTs is not observed. The geranylgeranyl diphosphate (GGPP) synthase ggs1, localized outside of the cluster, is proposed to catalyze the first step in nodulisporic acid biosynthesis via conversion of farnesyl pyrophosphate and isopentyl pyrophosphate into geranylgeranyl pyrophosphate (GGPP). Condensation of indole-3-glycerol phosphate with GGPP by the prenyl transferase nodC then forms 3-geranylgeranylindole (3-GGI). Epoxidation by the FAD-dependent monooxygenase nodM leads to a single-epoxidized-GGI that is substrate of the terpene cyclase nodB for cyclization to yield emindole SB. The terminal methyl carbon, C28, of emindole SB is then oxidized by the cytochrome P450 monooxygenase nodW to produce nodulisporic acid F (NAF), the pentacyclic core of NAA. NAF is converted to nodulisporic acid E (NAE) via prenylation. This step is probably performed by one of the indole diterpene prenyltransferases nodD1 or nodD2. Several oxidation steps performed by the FAD-linked oxidoreductase nodO and one of the cytochrome P450 monooxygenase nodR, nodX or nodZ further convert NAE to nodulisporic acid D (NAD). NAD is substrate of cytochrome P450 monooxygenase nodJ to produce the precursor of nodulisporic acid C (NAC), converted to NAC by one of the indole diterpene prenyltransferases nodD1 or nodD2. The FAD-dependent monooxygenase nodY2 then oxidizes NAC to nodulisporic acid B (NAB). Finally NAB is converted to NAA by one of the cytochrome P450 monooxygenases nodR, nodX or nodZ. The chain is Acetyl-coenzyme A transferase nodX from Hypoxylon pulicicidum.